A 137-amino-acid chain; its full sequence is MKKLAIAGALLLLAGCAEVENYNNVVKTPAPDWLAGYWQTKGPQRALVSPEAIGSLIVTKEGDTLDCRQWQRVIAVPGKLTLMSDDLTNVTVKRELYEVERDGNTIEYDGMTMERVDRPTAECAAALDKAPLPTPLP.

The signal sequence occupies residues 1–15 (MKKLAIAGALLLLAG). Residue Cys-16 is the site of N-palmitoyl cysteine attachment. Residue Cys-16 is the site of S-diacylglycerol cysteine attachment.

The protein localises to the cell membrane. This is an uncharacterized protein from Escherichia coli (strain K12).